An 80-amino-acid polypeptide reads, in one-letter code: uncharacterized protein (80 aa).

This is an uncharacterized protein from Invertebrate iridescent virus 6 (IIV-6).